A 178-amino-acid chain; its full sequence is Adenine phosphoribosyltransferase (178 aa).

It belongs to the purine/pyrimidine phosphoribosyltransferase family. In terms of assembly, homodimer.

It is found in the cytoplasm. It carries out the reaction AMP + diphosphate = 5-phospho-alpha-D-ribose 1-diphosphate + adenine. It functions in the pathway purine metabolism; AMP biosynthesis via salvage pathway; AMP from adenine: step 1/1. Functionally, catalyzes a salvage reaction resulting in the formation of AMP, that is energically less costly than de novo synthesis. In Bacteroides fragilis (strain ATCC 25285 / DSM 2151 / CCUG 4856 / JCM 11019 / LMG 10263 / NCTC 9343 / Onslow / VPI 2553 / EN-2), this protein is Adenine phosphoribosyltransferase.